The following is a 1097-amino-acid chain: RE1-silencing transcription factor (1097 aa).

The interaction with SIN3A stretch occupies residues 32–122 (DLHDLSKAEL…SLELSVVEPQ (91 aa)). An interaction with SIN3B region spans residues 43 to 57 (APQLIMLANVALTGE). Disordered regions lie at residues 83–103 (NFSD…KGEP) and 127–159 (ASGA…TKPF). Over residues 86–96 (DSEEGEGLEES) the composition is skewed to acidic residues. The interval 145-418 (PGAEDKGKSS…KSKHPTCPNK (274 aa)) is interaction with ZFP90. The C2H2-type 1 zinc-finger motif lies at 159-181 (FRCKPCQYEAESEEQFVHHIRVH). Residues 201-212 (SGSSTAEEGDFS) are required for binding to the neuron-restrictive silencer element. 7 C2H2-type zinc fingers span residues 216 to 238 (IRCD…LKHH), 248 to 270 (YKCI…LRNH), 276 to 298 (YTCG…VRTH), 304 to 326 (YKCE…MRTH), 332 to 355 (FKCD…RQVH), 361 to 383 (LNCP…VELH), and 389 to 412 (FNCP…KSKH). The segment covering 452–479 (KIKGDVAGKKNEKSVKAEKRDVSKEKKP) has biased composition (basic and acidic residues). 4 disordered regions span residues 452–642 (KIKG…MEGA), 774–837 (KEPV…EQVL), 853–938 (ESVS…NGKH), and 961–1049 (GINS…NAKE). Over residues 480–490 (SNNVSVIQVTT) the composition is skewed to polar residues. Basic and acidic residues-rich tracts occupy residues 495-504 (SVTEVKEMDV) and 559-570 (PKGDSKVEENKK). Residues 577 to 593 (KSTKKKTLKNKSSKKSS) show a composition bias toward basic residues. Residues 803–836 (PPLHMEPISKKPPLRKDKKEKSNMQSERARKEQV) are compositionally biased toward basic and acidic residues. S864 is subject to Phosphoserine. Residues 913-930 (INESTHISSSGQNLNTPE) are compositionally biased toward polar residues. At S971 the chain carries Phosphoserine. The tract at residues 1009-1087 (EGIHSHEGSD…HLNRHLVNVY (79 aa)) is interaction with RCOR1. The C2H2-type 9 zinc finger occupies 1060–1082 (FVCIFCDRSFRKGKDYSKHLNRH).

As to quaternary structure, isoform 1 and isoform 3 form heterodimers. Isoform 3: Forms homodimers and homooligomers; binds to the neuron-restrictive silencer element (NRSE) as monomer. Interacts with SIN3A, SIN3B and RCOR1. Interacts with CDYL. Interacts with EHMT1 and EHMT2 only in the presence of CDYL. Part of a complex containing at least CDYL, REST, WIZ, SETB1, EHMT1 and EHMT2. Interacts (via zinc-finger DNA-binding domain) with ZFP90 (via N- and C-termini); the interaction inhibits REST repressor activity. Interacts (via C2H2-type zinc finger 5) with PRICKLE1. Interacts with FBXW11 and BTRC. Interacts with USP7. O-glycosylated. In terms of processing, phosphorylated; phosphorylation is required for ubiquitination. Post-translationally, ubiquitinated; ubiquitination is mediated by BTRC and leads to proteasomal degradation in G2 phase. Ubiquitination increases during neuronal differentiation. Deubiquitinated by USP7; leading to its stabilization and promoting the maintenance of neural progenitor cells. As to expression, expressed in neurons of the prefrontal cortex, in hippocampal pyramidal neurons, dentate gyrus granule neurons and cerebellar Purkinje and granule neurons (at protein level). Expressed in dopaminergic neurons of the substantia nigra (at protein level). Expressed in neural progenitor cells (at protein level). In patients suffering from Alzheimer disease, frontotemporal dementia or dementia with Lewy bodies, decreased nuclear levels have been observed in neurons of the prefrontal cortex and the hippocampus, but not in neurons of the dentate gyrus and cerebellum (at protein level). In patients with Parkinson disease or dementia with Lewy bodies, decreased nuclear levels have been observed in dopaminergic neurons and in cortical neurons and localization to Lewy bodies and pale bodies was detected (at protein level). Expressed at higher levels in weakly invasive breast cancer cell lines and at lower levels in highly invasive breast cancer lines (at protein level). Ubiquitous. Expressed at higher levels in the tissues of the lymphocytic compartment, including spleen, thymus, peripheral blood lymphocytes and ovary.

Its subcellular location is the nucleus. The protein localises to the cytoplasm. Transcriptional repressor which binds neuron-restrictive silencer element (NRSE) and represses neuronal gene transcription in non-neuronal cells. Restricts the expression of neuronal genes by associating with two distinct corepressors, SIN3A and RCOR1, which in turn recruit histone deacetylase to the promoters of REST-regulated genes. Mediates repression by recruiting the BHC complex at RE1/NRSE sites which acts by deacetylating and demethylating specific sites on histones, thereby acting as a chromatin modifier. Transcriptional repression by REST-CDYL via the recruitment of histone methyltransferase EHMT2 may be important in transformation suppression. Represses the expression of SRRM4 in non-neural cells to prevent the activation of neural-specific splicing events and to prevent production of REST isoform 3. Repressor activity may be inhibited by forming heterodimers with isoform 3, thereby preventing binding to NRSE or binding to corepressors and leading to derepression of target genes. Also maintains repression of neuronal genes in neural stem cells, and allows transcription and differentiation into neurons by dissociation from RE1/NRSE sites of target genes. Thereby is involved in maintaining the quiescent state of adult neural stem cells and preventing premature differentiation into mature neurons. Plays a role in the developmental switch in synaptic NMDA receptor composition during postnatal development, by repressing GRIN2B expression and thereby altering NMDA receptor properties from containing primarily GRIN2B to primarily GRIN2A subunits. Acts as a regulator of osteoblast differentiation. Key repressor of gene expression in hypoxia; represses genes in hypoxia by direct binding to an RE1/NRSE site on their promoter regions. May also function in stress resistance in the brain during aging; possibly by regulating expression of genes involved in cell death and in the stress response. Repressor of gene expression in the hippocampus after ischemia by directly binding to RE1/NRSE sites and recruiting SIN3A and RCOR1 to promoters of target genes, thereby promoting changes in chromatin modifications and ischemia-induced cell death. After ischemia, might play a role in repression of miR-132 expression in hippocampal neurons, thereby leading to neuronal cell death. Negatively regulates the expression of SRRM3 in breast cancer cell lines. Its function is as follows. Binds to the 3' region of the neuron-restrictive silencer element (NRSE), with lower affinity than full-length REST isoform 1. Exhibits weaker repressor activity compared to isoform 1. May negatively regulate the repressor activity of isoform 1 by binding to isoform 1, thereby preventing its binding to NRSE and leading to derepression of target genes. However, in another study, does not appear to be implicated in repressor activity of a NRSE motif-containing reporter construct nor in inhibitory activity on the isoform 1 transcriptional repressor activity. Post-transcriptional inactivation of REST by SRRM4-dependent alternative splicing into isoform 3 is required in mechanosensory hair cells in the inner ear for derepression of neuronal genes and hearing. The protein is RE1-silencing transcription factor (REST) of Homo sapiens (Human).